A 1358-amino-acid chain; its full sequence is DNA-directed RNA polymerase subunit beta (1358 aa).

Belongs to the RNA polymerase beta chain family. In terms of assembly, the RNAP catalytic core consists of 2 alpha, 1 beta, 1 beta' and 1 omega subunit. When a sigma factor is associated with the core the holoenzyme is formed, which can initiate transcription.

The catalysed reaction is RNA(n) + a ribonucleoside 5'-triphosphate = RNA(n+1) + diphosphate. Its function is as follows. DNA-dependent RNA polymerase catalyzes the transcription of DNA into RNA using the four ribonucleoside triphosphates as substrates. This is DNA-directed RNA polymerase subunit beta from Francisella philomiragia subsp. philomiragia (strain ATCC 25017 / CCUG 19701 / FSC 153 / O#319-036).